We begin with the raw amino-acid sequence, 218 residues long: Small ribosomal subunit protein uS3c (218 aa).

In terms of domain architecture, KH type-2 spans 47–118; it reads VQKNIRISSG…KLNIAITRIS (72 aa).

Belongs to the universal ribosomal protein uS3 family. As to quaternary structure, part of the 30S ribosomal subunit.

It localises to the plastid. It is found in the chloroplast. This Lepidium virginicum (Virginia pepperweed) protein is Small ribosomal subunit protein uS3c (rps3).